The sequence spans 684 residues: Probable potassium transport system protein Kup (684 aa).

12 helical membrane passes run 19–39 (ALLV…LYVM), 61–81 (VSLI…LIAL), 104–124 (WLVL…MLTP), 151–171 (QVIW…RFGT), 177–197 (AFGP…FIAL), 223–243 (MGLF…ALYS), 255–275 (LSWP…AVWL), 303–323 (LGAI…LISG), 352–372 (LYIP…IGYF), 381–401 (AYGL…YQYL), 407–427 (PAVI…VFFI), and 433–453 (FLHG…VMYV).

It belongs to the HAK/KUP transporter (TC 2.A.72) family.

The protein resides in the cell membrane. The catalysed reaction is K(+)(in) + H(+)(in) = K(+)(out) + H(+)(out). Its function is as follows. Transport of potassium into the cell. Likely operates as a K(+):H(+) symporter. This chain is Probable potassium transport system protein Kup, found in Lacticaseibacillus casei (strain BL23) (Lactobacillus casei).